The chain runs to 320 residues: Nodulation efficiency protein NfeD (320 aa).

Belongs to the ornithine cyclodeaminase/mu-crystallin family.

Seems to be involved in the nodulation efficiency of R.meliloti GR4 on alfalfa roots. This Rhizobium meliloti (Ensifer meliloti) protein is Nodulation efficiency protein NfeD.